The chain runs to 525 residues: Peptide chain release factor 3 (525 aa).

Positions 8 to 276 (AMRRTFAIIS…AFVKEAPPPQ (269 aa)) constitute a tr-type G domain. Residues 17–24 (SHPDAGKT), 85–89 (DTPGH), and 139–142 (NKMD) each bind GTP.

The protein belongs to the TRAFAC class translation factor GTPase superfamily. Classic translation factor GTPase family. PrfC subfamily.

Its subcellular location is the cytoplasm. In terms of biological role, increases the formation of ribosomal termination complexes and stimulates activities of RF-1 and RF-2. It binds guanine nucleotides and has strong preference for UGA stop codons. It may interact directly with the ribosome. The stimulation of RF-1 and RF-2 is significantly reduced by GTP and GDP, but not by GMP. The protein is Peptide chain release factor 3 of Coxiella burnetii (strain RSA 331 / Henzerling II).